Here is a 213-residue protein sequence, read N- to C-terminus: Ribosomal RNA large subunit methyltransferase E (213 aa).

S-adenosyl-L-methionine-binding residues include Gly59, Phe61, Asp79, Asp97, and Asp121. Lys161 (proton acceptor) is an active-site residue.

Belongs to the class I-like SAM-binding methyltransferase superfamily. RNA methyltransferase RlmE family.

Its subcellular location is the cytoplasm. The enzyme catalyses uridine(2552) in 23S rRNA + S-adenosyl-L-methionine = 2'-O-methyluridine(2552) in 23S rRNA + S-adenosyl-L-homocysteine + H(+). Functionally, specifically methylates the uridine in position 2552 of 23S rRNA at the 2'-O position of the ribose in the fully assembled 50S ribosomal subunit. This Myxococcus xanthus (strain DK1622) protein is Ribosomal RNA large subunit methyltransferase E.